Here is a 29-residue protein sequence, read N- to C-terminus: Lambda-theraphotoxin-Ec2a (29 aa).

Cystine bridges form between C2/C16, C9/C21, and C15/C25.

This sequence belongs to the neurotoxin 30 (phrixotoxin) family. As to expression, expressed by the venom gland.

The protein localises to the secreted. Insect-selective neurotoxin that potently blocks insect calcium-activated potassium (BKCa) channels (Slo-type) in cockroach dorsal unpaired median (DUM) neurons (IC(50)=3.7 nM). This occurs in the absence of any shifts in the voltage dependence of activation. At high concentrations (330 nM), it partially inhibits cockroach delayed-rectifier potassium channels (Kv) currents. May interact with the turret and/or loop region of the external entrance to the channel and does not project deeply into the pore of the channel. In vivo, does not show toxicity in mice after intracerebroventricular injection of up to 25 pmol/g (1.8 ug/20 g mouse). The chain is Lambda-theraphotoxin-Ec2a from Eucratoscelus constrictus (African red-rump baboon spider).